Here is a 2473-residue protein sequence, read N- to C-terminus: MPALRPAALRALLWLWLCGAGPAHALQCRGGQEPCVNEGTCVTYHNGTGFCRCPEGFLGEYCQHRDPCEKNRCQNGGTCVPQGMLGKATCRCAPGFTGEDCQYSTSHPCFVSRPCQNGGTCHMLSRDTYECTCQVGFTGKQCQWTDACLSHPCENGSTCTSVASQFSCKCPAGLTGQKCEADINECDIPGRCQHGGTCLNLPGSYRCQCPQGFTGQHCDSPYVPCAPSPCVNGGTCRQTGDFTFECNCLPGFEGSTCERNIDDCPNHKCQNGGVCVDGVNTYNCRCPPQWTGQFCTEDVDECLLQPNACQNGGTCTNRNGGYGCVCVNGWSGDDCSENIDDCAYASCTPGSTCIDRVASFSCLCPEGKAGLLCHLDDACISNPCHKGALCDTNPLNGQYICTCPQGYKGADCTEDVDECAMANSNPCEHAGKCVNTDGAFHCECLKGYAGPRCEMDINECHSDPCQNDATCLDKIGGFTCLCMPGFKGVHCELEVNECQSNPCVNNGQCVDKVNRFQCLCPPGFTGPVCQIDIDDCSSTPCLNGAKCIDHPNGYECQCATGFTGILCDENIDNCDPDPCHHGQCQDGIDSYTCICNPGYMGAICSDQIDECYSSPCLNDGRCIDLVNGYQCNCQPGTSGLNCEINFDDCASNPCMHGVCVDGINRYSCVCSPGFTGQRCNIDIDECASNPCRKGATCINDVNGFRCICPEGPHHPSCYSQVNECLSNPCIHGNCTGGLSGYKCLCDAGWVGVNCEVDKNECLSNPCQNGGTCNNLVNGYRCTCKKGFKGYNCQVNIDECASNPCLNQGTCFDDVSGYTCHCMLPYTGKNCQTVLAPCSPNPCENAAVCKEAPNFESFSCLCAPGWQGKRCTVDVDECISKPCMNNGVCHNTQGSYVCECPPGFSGMDCEEDINDCLANPCQNGGSCVDHVNTFSCQCHPGFIGDKCQTDMNECLSEPCKNGGTCSDYVNSYTCTCPAGFHGVHCENNIDECTESSCFNGGTCVDGINSFSCLCPVGFTGPFCLHDINECSSNPCLNAGTCVDGLGTYRCICPLGYTGKNCQTLVNLCSRSPCKNKGTCVQEKARPHCLCPPGWDGAYCDVLNVSCKAAALQKGVPVEHLCQHSGICINAGNTHHCQCPLGYTGSYCEEQLDECASNPCQHGATCNDFIGGYRCECVPGYQGVNCEYEVDECQNQPCQNGGTCIDLVNHFKCSCPPGTRGLLCEENIDECAGGPHCLNGGQCVDRIGGYTCRCLPGFAGERCEGDINECLSNPCSSEGSLDCVQLKNNYNCICRSAFTGRHCETFLDVCPQKPCLNGGTCAVASNMPDGFICRCPPGFSGARCQSSCGQVKCRRGEQCIHTDSGPRCFCLNPKDCESGCASNPCQHGGTCYPQRQPPHYSCRCPPSFGGSHCELYTAPTSTPPATCQSQYCADKARDGICDEACNSHACQWDGGDCSLTMEDPWANCTSTLRCWEYINNQCDEQCNTAECLFDNFECQRNSKTCKYDKYCADHFKDNHCDQGCNSEECGWDGLDCASDQPENLAEGTLIIVVLLPPEQLLQDSRSFLRALGTLLHTNLRIKQDSQGALMVYPYFGEKSAAMKKQKMTRRSLPEEQEQEQEVIGSKIFLEIDNRQCVQDSDQCFKNTDAAAALLASHAIQGTLSYPLVSVFSELESPRNAQLLYLLAVAVVIILFFILLGVIMAKRKRKHGFLWLPEGFTLRRDSSNHKRREPVGQDAVGLKNLSVQVSEANLIGSGTSEHWVDDEGPQPKKAKAEDEALLSEDDPIDRRPWTQQHLEAADIRHTPSLALTPPQAEQEVDVLDVNVRGPDGCTPLMLASLRGGSSDLSDEDEDAEDSSANIITDLVYQGASLQAQTDRTGEMALHLAARYSRADAAKRLLDAGADANAQDNMGRCPLHAAVAADAQGVFQILIRNRVTDLDARMNDGTTPLILAARLAVEGMVAELINCQADVNAVDDHGKSALHWAAAVNNVEATLLLLKNGANRDMQDNKEETPLFLAAREGSYEAAKILLDHFANRDITDHMDRLPRDVARDRMHHDIVRLLDEYNVTPSPPGTVLTSALSPVLCGPNRSFLSLKHTPMGKKARRPNTKSTMPTSLPNLAKEAKDAKGSRRKKCLNEKVQLSESSVTLSPVDSLESPHTYVSDATSSPMITSPGILQASPTPLLAAAAPAAPVHTQHALSFSNLHDMQPLAPGASTVLPSVSQLLSHHHIAPPGSSSAGSLGRLHPVPVPADWMNRVEMNETQYSEMFGMVLAPAEGAHPGIAAPQSRPPEGKHMSTQREPLPPIVTFQLIPKGSIAQAAGAPQTQSSCPPAVAGPLPSMYQIPEMPRLPSVAFPPTMMPQQEGQVAQTIVPTYHPFPASVGKYPTPPSQHSYASSNAAERTPSHGGHLQGEHPYLTPSPESPDQWSSSSPHSASDWSDVTTSPTPGGGGGGQRGPGTHMSEPPHSNMQVYA.

Residues 1 to 25 form the signal peptide; it reads MPALRPAALRALLWLWLCGAGPAHA. 4 EGF-like domains span residues 26–63, 64–102, 105–143, and 144–180; these read LQCRGGQEPCVNEGTCVTYHNGTGFCRCPEGFLGEYCQ, HRDPCEKNRCQNGGTCVPQGMLGKATCRCAPGFTGEDCQ, TSHPCFVSRPCQNGGTCHMLSRDTYECTCQVGFTGKQCQ, and WTDACLSHPCENGSTCTSVASQFSCKCPAGLTGQKCE. Topologically, residues 26-1679 are extracellular; sequence LQCRGGQEPC…SELESPRNAQ (1654 aa). 83 disulfide bridges follow: cysteine 28/cysteine 41, cysteine 35/cysteine 51, cysteine 53/cysteine 62, cysteine 68/cysteine 79, cysteine 73/cysteine 90, cysteine 92/cysteine 101, cysteine 109/cysteine 121, cysteine 115/cysteine 131, cysteine 133/cysteine 142, cysteine 148/cysteine 159, cysteine 153/cysteine 168, cysteine 170/cysteine 179, cysteine 186/cysteine 198, cysteine 192/cysteine 207, cysteine 209/cysteine 218, cysteine 230/cysteine 246, cysteine 248/cysteine 257, cysteine 264/cysteine 275, cysteine 269/cysteine 284, cysteine 286/cysteine 295, cysteine 302/cysteine 315, cysteine 309/cysteine 324, cysteine 326/cysteine 335, cysteine 342/cysteine 353, cysteine 347/cysteine 362, cysteine 364/cysteine 373, cysteine 379/cysteine 390, cysteine 384/cysteine 401, cysteine 403/cysteine 412, cysteine 419/cysteine 433, cysteine 427/cysteine 442, cysteine 444/cysteine 453, cysteine 460/cysteine 471, cysteine 465/cysteine 480, cysteine 482/cysteine 491, cysteine 498/cysteine 509, cysteine 503/cysteine 518, cysteine 520/cysteine 529, cysteine 536/cysteine 547, cysteine 541/cysteine 556, cysteine 558/cysteine 567, cysteine 574/cysteine 584, cysteine 579/cysteine 593, cysteine 595/cysteine 604, cysteine 611/cysteine 622, cysteine 616/cysteine 631, cysteine 633/cysteine 642, cysteine 649/cysteine 659, cysteine 654/cysteine 668, cysteine 670/cysteine 679, cysteine 686/cysteine 697, cysteine 691/cysteine 706, cysteine 708/cysteine 717, cysteine 724/cysteine 734, cysteine 729/cysteine 743, cysteine 745/cysteine 754, cysteine 761/cysteine 772, cysteine 766/cysteine 781, cysteine 783/cysteine 792, cysteine 799/cysteine 810, cysteine 804/cysteine 819, cysteine 821/cysteine 830, cysteine 837/cysteine 848, cysteine 842/cysteine 859, cysteine 861/cysteine 870, cysteine 877/cysteine 888, cysteine 882/cysteine 897, cysteine 899/cysteine 908, cysteine 915/cysteine 926, cysteine 920/cysteine 935, cysteine 937/cysteine 946, cysteine 953/cysteine 964, cysteine 958/cysteine 973, cysteine 975/cysteine 984, cysteine 991/cysteine 1002, cysteine 996/cysteine 1011, cysteine 1013/cysteine 1022, cysteine 1029/cysteine 1040, cysteine 1034/cysteine 1049, cysteine 1051/cysteine 1060, cysteine 1067/cysteine 1078, cysteine 1072/cysteine 1087, and cysteine 1089/cysteine 1098. A glycan (N-linked (GlcNAc...) asparagine) is linked at asparagine 46. Asparagine 155 carries N-linked (GlcNAc...) asparagine glycosylation. The EGF-like 5; calcium-binding domain occupies 182 to 219; the sequence is DINECDIPGRCQHGGTCLNLPGSYRCQCPQGFTGQHCD. One can recognise an EGF-like 6; incomplete domain in the interval 221–258; the sequence is PYVPCAPSPCVNGGTCRQTGDFTFECNCLPGFEGSTCE. The EGF-like 7; calcium-binding domain occupies 260 to 296; the sequence is NIDDCPNHKCQNGGVCVDGVNTYNCRCPPQWTGQFCT. The EGF-like 8; calcium-binding domain maps to 298 to 336; the sequence is DVDECLLQPNACQNGGTCTNRNGGYGCVCVNGWSGDDCS. In terms of domain architecture, EGF-like 9; calcium-binding spans 338-374; the sequence is NIDDCAYASCTPGSTCIDRVASFSCLCPEGKAGLLCH. One can recognise an EGF-like 10 domain in the interval 375–413; that stretch reads LDDACISNPCHKGALCDTNPLNGQYICTCPQGYKGADCT. Residues 415 to 454 form the EGF-like 11; calcium-binding domain; that stretch reads DVDECAMANSNPCEHAGKCVNTDGAFHCECLKGYAGPRCE. An EGF-like 12; calcium-binding domain is found at 456–492; the sequence is DINECHSDPCQNDATCLDKIGGFTCLCMPGFKGVHCE. An EGF-like 13; calcium-binding domain is found at 494 to 530; sequence EVNECQSNPCVNNGQCVDKVNRFQCLCPPGFTGPVCQ. The region spanning 532 to 568 is the EGF-like 14; calcium-binding domain; that stretch reads DIDDCSSTPCLNGAKCIDHPNGYECQCATGFTGILCD. An EGF-like 15; calcium-binding domain is found at 570 to 605; that stretch reads NIDNCDPDPCHHGQCQDGIDSYTCICNPGYMGAICS. The EGF-like 16; calcium-binding domain occupies 607–643; sequence QIDECYSSPCLNDGRCIDLVNGYQCNCQPGTSGLNCE. Serine 613 carries an O-linked (Glc...) serine; alternate glycan. O-linked (Xyl...) serine; alternate glycosylation occurs at serine 613. Residues 645–680 form the EGF-like 17; calcium-binding domain; it reads NFDDCASNPCMHGVCVDGINRYSCVCSPGFTGQRCN. The region spanning 682–718 is the EGF-like 18; calcium-binding domain; sequence DIDECASNPCRKGATCINDVNGFRCICPEGPHHPSCY. One can recognise an EGF-like 19 domain in the interval 720 to 755; the sequence is QVNECLSNPCIHGNCTGGLSGYKCLCDAGWVGVNCE. A glycan (N-linked (GlcNAc...) asparagine) is linked at asparagine 733. One can recognise an EGF-like 20; calcium-binding domain in the interval 757–793; sequence DKNECLSNPCQNGGTCNNLVNGYRCTCKKGFKGYNCQ. An EGF-like 21; calcium-binding domain is found at 795-831; the sequence is NIDECASNPCLNQGTCFDDVSGYTCHCMLPYTGKNCQ. Residues 833–871 enclose the EGF-like 22 domain; the sequence is VLAPCSPNPCENAAVCKEAPNFESFSCLCAPGWQGKRCT. The EGF-like 23; calcium-binding domain occupies 873 to 909; it reads DVDECISKPCMNNGVCHNTQGSYVCECPPGFSGMDCE. The EGF-like 24; calcium-binding domain maps to 911–947; the sequence is DINDCLANPCQNGGSCVDHVNTFSCQCHPGFIGDKCQ. The EGF-like 25; calcium-binding domain maps to 949–985; it reads DMNECLSEPCKNGGTCSDYVNSYTCTCPAGFHGVHCE. One can recognise an EGF-like 26; calcium-binding domain in the interval 987–1023; the sequence is NIDECTESSCFNGGTCVDGINSFSCLCPVGFTGPFCL. In terms of domain architecture, EGF-like 27; calcium-binding spans 1025–1061; sequence DINECSSNPCLNAGTCVDGLGTYRCICPLGYTGKNCQ. EGF-like domains lie at 1063-1099 and 1101-1147; these read LVNLCSRSPCKNKGTCVQEKARPHCLCPPGWDGAYCD and LNVS…SYCE. Residue asparagine 1102 is glycosylated (N-linked (GlcNAc...) asparagine). 24 disulfides stabilise this stretch: cysteine 1105–cysteine 1126, cysteine 1120–cysteine 1135, cysteine 1137–cysteine 1146, cysteine 1153–cysteine 1164, cysteine 1158–cysteine 1173, cysteine 1175–cysteine 1184, cysteine 1191–cysteine 1202, cysteine 1196–cysteine 1211, cysteine 1213–cysteine 1222, cysteine 1229–cysteine 1241, cysteine 1235–cysteine 1250, cysteine 1252–cysteine 1261, cysteine 1268–cysteine 1281, cysteine 1273–cysteine 1290, cysteine 1292–cysteine 1301, cysteine 1308–cysteine 1319, cysteine 1313–cysteine 1331, cysteine 1333–cysteine 1346, cysteine 1378–cysteine 1389, cysteine 1383–cysteine 1400, cysteine 1402–cysteine 1411, cysteine 1425–cysteine 1448, cysteine 1430–cysteine 1443, and cysteine 1439–cysteine 1455. One can recognise an EGF-like 30; calcium-binding domain in the interval 1149–1185; sequence QLDECASNPCQHGATCNDFIGGYRCECVPGYQGVNCE. The region spanning 1187-1223 is the EGF-like 31; calcium-binding domain; sequence EVDECQNQPCQNGGTCIDLVNHFKCSCPPGTRGLLCE. One can recognise an EGF-like 32; calcium-binding domain in the interval 1225–1262; the sequence is NIDECAGGPHCLNGGQCVDRIGGYTCRCLPGFAGERCE. 3 consecutive EGF-like domains span residues 1264–1302, 1304–1343, and 1375–1412; these read DINECLSNPCSSEGSLDCVQLKNNYNCICRSAFTGRHCE, FLDVCPQKPCLNGGTCAVASNMPDGFICRCPPGFSGARCQ, and ESGCASNPCQHGGTCYPQRQPPHYSCRCPPSFGGSHCE. LNR repeat units lie at residues 1425–1465, 1466–1502, and 1503–1544; these read CQSQ…PWAN, CTSTLRCWEYINNQCDEQCNTAECLFDNFECQRNSKT, and CKYD…NLAE. The interval 1425–1679 is negative regulatory region (NRR); it reads CQSQYCADKA…SELESPRNAQ (255 aa). An N-linked (GlcNAc...) asparagine glycan is attached at asparagine 1465. 7 cysteine pairs are disulfide-bonded: cysteine 1466–cysteine 1489, cysteine 1472–cysteine 1484, cysteine 1480–cysteine 1496, cysteine 1503–cysteine 1527, cysteine 1509–cysteine 1522, cysteine 1518–cysteine 1534, and cysteine 1634–cysteine 1641. A helical transmembrane segment spans residues 1680 to 1700; the sequence is LLYLLAVAVVIILFFILLGVI. Topologically, residues 1701-2473 are cytoplasmic; sequence MAKRKRKHGF…PPHSNMQVYA (773 aa). The residue at position 1718 (threonine 1718) is a Phosphothreonine. Residues 1755–1778 are disordered; that stretch reads GTSEHWVDDEGPQPKKAKAEDEAL. The residue at position 1780 (serine 1780) is a Phosphoserine. At threonine 1803 the chain carries Phosphothreonine. Phosphoserine is present on serine 1805. Threonine 1809 is subject to Phosphothreonine. ANK repeat units follow at residues 1828–1872, 1877–1906, 1910–1940, 1944–1973, 1977–2006, and 2010–2039; these read DGCT…SLQA, TGEMALHLAARYSRADAAKRLLDAGADANA, MGRCPLHAAVAADAQGVFQILIRNRVTDLDA, DGTTPLILAARLAVEGMVAELINCQADVNA, HGKSALHWAAAVNNVEATLLLLKNGANRDM, and KEETPLFLAAREGSYEAAKILLDHFANRDI. Serine 1843 and serine 1846 each carry phosphoserine. 3 positions are modified to phosphoserine: serine 2071, serine 2079, and serine 2082. Position 2098 is a phosphothreonine (threonine 2098). Disordered regions lie at residues 2098 to 2117, 2122 to 2169, and 2382 to 2473; these read TPMGKKARRPNTKSTMPTSL, KEAK…TSSP, and VGKY…QVYA. A compositionally biased stretch (basic residues) spans 2099-2108; it reads PMGKKARRPN. Composition is skewed to polar residues over residues 2140-2151 and 2390-2400; these read VQLSESSVTLSP and SQHSYASSNAA. The span at 2419 to 2446 shows a compositional bias: low complexity; sequence PSPESPDQWSSSSPHSASDWSDVTTSPT. Over residues 2447-2456 the composition is skewed to gly residues; it reads PGGGGGGQRG.

Belongs to the NOTCH family. As to quaternary structure, heterodimer of a C-terminal fragment N(TM) and an N-terminal fragment N(EC) which are probably linked by disulfide bonds. Interacts with MAML1, MAML2 and MAML3 which act as transcriptional coactivators for NOTCH2. Interacts with RELA/p65. Interacts with HIF1AN. Interacts (via ANK repeats) with TCIM, the interaction inhibits the nuclear translocation of NOTCH2 N2ICD. Interacts with CUL1, RBX1, SKP1 and FBXW7 that are SCF(FBXW7) E3 ubiquitin-protein ligase complex components. Interacts with MINAR1; this interaction increases MINAR1 stability and function. Interacts with MDK; this interaction mediates a nuclear accumulation of NOTCH2 and therefore activation of NOTCH2 signaling leading to interaction between HES1 and STAT3. Interacts with MINAR2. Post-translationally, synthesized in the endoplasmic reticulum as an inactive form which is proteolytically cleaved by a furin-like convertase in the trans-Golgi network before it reaches the plasma membrane to yield an active, ligand-accessible form. Cleavage results in a C-terminal fragment N(TM) and a N-terminal fragment N(EC). Following ligand binding, it is cleaved by TNF-alpha converting enzyme (TACE) to yield a membrane-associated intermediate fragment called notch extracellular truncation (NEXT). This fragment is then cleaved by presenilin dependent gamma-secretase to release a notch-derived peptide containing the intracellular domain (NICD) from the membrane. Hydroxylated by HIF1AN. In terms of processing, can be either O-glucosylated or O-xylosylated at Ser-613 by POGLUT1. Post-translationally, phosphorylated by GSK3. GSK3-mediated phosphorylation is necessary for NOTCH2 recognition by FBXW7, ubiquitination and degradation via the ubiquitin proteasome pathway. As to expression, expressed in the brain, liver, kidney, neuroepithelia, somites, optic vesicles and branchial arches, but not heart.

The protein localises to the cell membrane. The protein resides in the nucleus. It localises to the cytoplasm. In terms of biological role, functions as a receptor for membrane-bound ligands Jagged-1 (JAG1), Jagged-2 (JAG2) and Delta-1 (DLL1) to regulate cell-fate determination. Upon ligand activation through the released notch intracellular domain (NICD) it forms a transcriptional activator complex with RBPJ/RBPSUH and activates genes of the enhancer of split locus. Affects the implementation of differentiation, proliferation and apoptotic programs. May play an essential role in postimplantation development, probably in some aspect of cell specification and/or differentiation. In collaboration with RELA/p65 enhances NFATc1 promoter activity and positively regulates RANKL-induced osteoclast differentiation. Positively regulates self-renewal of liver cancer cells. This Mus musculus (Mouse) protein is Neurogenic locus notch homolog protein 2.